The chain runs to 145 residues: Plastocyanin, chloroplastic (145 aa).

Residues M1 to A48 constitute a chloroplast transit peptide. The region spanning A49 to Q145 is the Plastocyanin-like domain. Residues H85, C130, H133, and M138 each coordinate Cu cation.

Belongs to the plastocyanin family. It depends on Cu(2+) as a cofactor.

It localises to the plastid. The protein resides in the chloroplast thylakoid membrane. In terms of biological role, participates in electron transfer between P700 and the cytochrome b6-f complex in photosystem I. This chain is Plastocyanin, chloroplastic (PETE), found in Tetradesmus obliquus (Green alga).